The chain runs to 274 residues: Cytochrome c oxidase subunit 3 (274 aa).

Helical transmembrane passes span 22 to 42 (PSPW…GGVM), 47 to 67 (FAAG…SMLL), 93 to 113 (GVVL…WAFF), 137 to 157 (PFEV…TITV), 170 to 190 (TILY…LQWV), 208 to 228 (FFVA…FLTV), and 248 to 268 (AAIW…VSVY).

The protein belongs to the cytochrome c oxidase subunit 3 family. In terms of assembly, component of the cytochrome c oxidase (complex IV, CIV), a multisubunit enzyme composed of a catalytic core of 3 subunits and several supernumerary subunits. The complex exists as a monomer or a dimer and forms supercomplexes (SCs) in the inner mitochondrial membrane with ubiquinol-cytochrome c oxidoreductase (cytochrome b-c1 complex, complex III, CIII).

Its subcellular location is the mitochondrion inner membrane. The enzyme catalyses 4 Fe(II)-[cytochrome c] + O2 + 8 H(+)(in) = 4 Fe(III)-[cytochrome c] + 2 H2O + 4 H(+)(out). Functionally, component of the cytochrome c oxidase, the last enzyme in the mitochondrial electron transport chain which drives oxidative phosphorylation. The respiratory chain contains 3 multisubunit complexes succinate dehydrogenase (complex II, CII), ubiquinol-cytochrome c oxidoreductase (cytochrome b-c1 complex, complex III, CIII) and cytochrome c oxidase (complex IV, CIV), that cooperate to transfer electrons derived from NADH and succinate to molecular oxygen, creating an electrochemical gradient over the inner membrane that drives transmembrane transport and the ATP synthase. Cytochrome c oxidase is the component of the respiratory chain that catalyzes the reduction of oxygen to water. Electrons originating from reduced cytochrome c in the intermembrane space (IMS) are transferred via the dinuclear copper A center (CU(A)) of subunit 2 and heme A of subunit 1 to the active site in subunit 1, a binuclear center (BNC) formed by heme A3 and copper B (CU(B)). The BNC reduces molecular oxygen to 2 water molecules using 4 electrons from cytochrome c in the IMS and 4 protons from the mitochondrial matrix. This chain is Cytochrome c oxidase subunit 3 (COX3), found in Allomyces macrogynus.